The chain runs to 92 residues: Putative protein pog (92 aa).

The chain is Putative protein pog from Acute bee paralysis virus (strain Rothamsted) (ABPV).